The following is an 824-amino-acid chain: E3 ubiquitin-protein ligase TRIM71 (824 aa).

Residues 23–93 (CPLCKELCGC…PLKLRCPTCD (71 aa)) form an RING-type zinc finger. The segment at 37-56 (SSNSSTSSSSSQTSNSSSTS) is disordered. The B box-type 1; atypical zinc finger occupies 147–194 (LSDPQCSSCDEGNPATSHCLDCQEYLCDNCVRAHQRVRLTKDHFIEGL). Positions 152, 155, 176, 180, 234, 237, 257, and 262 each coordinate Zn(2+). A B box-type 2 zinc finger spans residues 229 to 270 (ERMDFCQHHDDAVLRFFCDSCTVPICRECSLGRHAGHSFTYL). Positions 293-321 (QAIQLSIEKAQAIAEQVELKAKVVQSEVK) form a coiled coil. The stretch at 435 to 536 (SSGAFATASK…IEGSPFKVMV (102 aa)) is one Filamin repeat. 6 NHL repeats span residues 549 to 592 (MASF…FKPC), 596 to 639 (HHKF…FTFD), 643 to 686 (LLKF…FGPD), 690 to 733 (LNKY…IRPD), 737 to 780 (ARFL…FEPN), and 784 to 824 (LCKF…ILMF).

Belongs to the TRIM/RBCC family.

Its subcellular location is the cytoplasm. It is found in the P-body. It catalyses the reaction S-ubiquitinyl-[E2 ubiquitin-conjugating enzyme]-L-cysteine + [acceptor protein]-L-lysine = [E2 ubiquitin-conjugating enzyme]-L-cysteine + N(6)-ubiquitinyl-[acceptor protein]-L-lysine.. It participates in protein modification; protein ubiquitination. E3 ubiquitin-protein ligase that cooperates with the microRNAs (miRNAs) machinery and promotes embryonic stem cells proliferation and maintenance. Binds to miRNAs and participates in post-transcriptional repression of transcripts. Required to maintain proliferation and prevent premature differentiation of neural progenitor cells during early neural development. The polypeptide is E3 ubiquitin-protein ligase TRIM71 (trim71) (Danio rerio (Zebrafish)).